A 250-amino-acid chain; its full sequence is Flavin-dependent thymidylate synthase (250 aa).

The region spanning 7-233 (LRVQLIAKTD…PAVFADFEIA (227 aa)) is the ThyX domain. FAD contacts are provided by residues Ser-71, 95–97 (RHR), and Gln-103. Residues 92-95 (ELIR), 103-107 (QLSQR), and Arg-172 each bind dUMP. The ThyX motif signature appears at 95–105 (RHRHFSYSQLS). Residues 188 to 190 (NYR) and His-194 each bind FAD. Arg-199 contributes to the dUMP binding site. The Involved in ionization of N3 of dUMP, leading to its activation role is filled by Arg-199.

Belongs to the thymidylate synthase ThyX family. In terms of assembly, homotetramer. FAD serves as cofactor.

It carries out the reaction dUMP + (6R)-5,10-methylene-5,6,7,8-tetrahydrofolate + NADPH + H(+) = dTMP + (6S)-5,6,7,8-tetrahydrofolate + NADP(+). The protein operates within pyrimidine metabolism; dTTP biosynthesis. Catalyzes the reductive methylation of 2'-deoxyuridine-5'-monophosphate (dUMP) to 2'-deoxythymidine-5'-monophosphate (dTMP) while utilizing 5,10-methylenetetrahydrofolate (mTHF) as the methyl donor, and NADPH and FADH(2) as the reductant. This chain is Flavin-dependent thymidylate synthase, found in Mycobacterium avium (strain 104).